The following is a 490-amino-acid chain: Betaine aldehyde dehydrogenase (490 aa).

3 residues coordinate K(+): T26, I27, and D93. NAD(+) is bound at residue 150–152 (GAW). The active-site Charge relay system is the K162. NAD(+) is bound at residue 176-179 (KPSE). V180 contributes to the K(+) binding site. 230–233 (GVAS) provides a ligand contact to NAD(+). L246 provides a ligand contact to K(+). The active-site Proton acceptor is E252. NAD(+)-binding residues include G254, C286, and E387. The Nucleophile role is filled by C286. C286 carries the cysteine sulfenic acid (-SOH) modification. Residues K457 and G460 each coordinate K(+). E464 (charge relay system) is an active-site residue.

The protein belongs to the aldehyde dehydrogenase family. Dimer of dimers. The cofactor is K(+).

The catalysed reaction is betaine aldehyde + NAD(+) + H2O = glycine betaine + NADH + 2 H(+). Its pathway is amine and polyamine biosynthesis; betaine biosynthesis via choline pathway; betaine from betaine aldehyde: step 1/1. Involved in the biosynthesis of the osmoprotectant glycine betaine. Catalyzes the irreversible oxidation of betaine aldehyde to the corresponding acid. The polypeptide is Betaine aldehyde dehydrogenase (Escherichia coli O139:H28 (strain E24377A / ETEC)).